We begin with the raw amino-acid sequence, 491 residues long: Ketol-acid reductoisomerase (NADP(+)) (491 aa).

One can recognise a KARI N-terminal Rossmann domain in the interval 15–208; it reads AQLGKCRFMG…GGHRAGVLES (194 aa). NADP(+)-binding positions include 45–48, arginine 68, arginine 76, serine 78, and 108–110; these read CGAQ and DKQ. Residue histidine 132 is part of the active site. NADP(+) is bound at residue glycine 158. 2 KARI C-terminal knotted domains span residues 209 to 344 and 345 to 484; these read SFVA…TAPQ and FEGK…MTDM. Mg(2+) is bound by residues aspartate 217, glutamate 221, glutamate 389, and glutamate 393. Serine 414 is a substrate binding site.

Belongs to the ketol-acid reductoisomerase family. Requires Mg(2+) as cofactor.

The catalysed reaction is (2R)-2,3-dihydroxy-3-methylbutanoate + NADP(+) = (2S)-2-acetolactate + NADPH + H(+). It catalyses the reaction (2R,3R)-2,3-dihydroxy-3-methylpentanoate + NADP(+) = (S)-2-ethyl-2-hydroxy-3-oxobutanoate + NADPH + H(+). Its pathway is amino-acid biosynthesis; L-isoleucine biosynthesis; L-isoleucine from 2-oxobutanoate: step 2/4. The protein operates within amino-acid biosynthesis; L-valine biosynthesis; L-valine from pyruvate: step 2/4. In terms of biological role, involved in the biosynthesis of branched-chain amino acids (BCAA). Catalyzes an alkyl-migration followed by a ketol-acid reduction of (S)-2-acetolactate (S2AL) to yield (R)-2,3-dihydroxy-isovalerate. In the isomerase reaction, S2AL is rearranged via a Mg-dependent methyl migration to produce 3-hydroxy-3-methyl-2-ketobutyrate (HMKB). In the reductase reaction, this 2-ketoacid undergoes a metal-dependent reduction by NADPH to yield (R)-2,3-dihydroxy-isovalerate. The protein is Ketol-acid reductoisomerase (NADP(+)) of Salmonella schwarzengrund (strain CVM19633).